Reading from the N-terminus, the 746-residue chain is PAN2-PAN3 deadenylation complex subunit pan3 (746 aa).

The C3H1-type zinc-finger motif lies at 7–35 (PKNQKQCKNIALHGYCRNSDKCEFSHELT). Low complexity predominate over residues 64 to 97 (QQQQQQQNSNGNGSNNTATSNNPIISPNSNIASP). 3 disordered regions span residues 64–100 (QQQQQQQNSNGNGSNNTATSNNPIISPNSNIASPLKK), 169–205 (DDQHLYPYGDNSVDDYEQHQYEPQPQPNNGIDPNMNN), and 219–275 (NASP…PSLQ). A compositionally biased stretch (polar residues) spans 196–205 (NNGIDPNMNN). Residues 221 to 275 (SPQSYQQQFQQPNPSPQSSSQQQQQQQQQQQQAVYQQQQQQQPSSQPLAQNPSLQ) show a composition bias toward low complexity. Residues 351–610 (DPNDPRIKNI…NIDEVVLMIS (260 aa)) are pseudokinase domain. Residues R407, 457–464 (EFFPGSET), and 509–510 (SK) each bind ATP. A coiled-coil region spans residues 611 to 649 (GRLLQENNYLHTYTDDLETELSKEYENGRLFRLVTKLGF). A knob domain region spans residues 650-746 (INERPLYDMD…SELVSQKSHI (97 aa)).

Belongs to the protein kinase superfamily. PAN3 family. In terms of assembly, homodimer. Forms a heterotrimer with a catalytic subunit PAN2 to form the poly(A)-nuclease (PAN) deadenylation complex. Interacts (via PAM-2 motif) with poly(A)-binding protein (via PABC domain), conferring substrate specificity of the enzyme complex.

It localises to the cytoplasm. Its function is as follows. Regulatory subunit of the poly(A)-nuclease (PAN) deadenylation complex, one of two cytoplasmic mRNA deadenylases involved in mRNA turnover. PAN specifically shortens poly(A) tails of RNA and the activity is stimulated by poly(A)-binding protein (PABP). PAN deadenylation is followed by rapid degradation of the shortened mRNA tails by the CCR4-NOT complex. Deadenylated mRNAs are then degraded by two alternative mechanisms, namely exosome-mediated 3'-5' exonucleolytic degradation, or deadenylation-dependent mRNA decaping and subsequent 5'-3' exonucleolytic degradation by XRN1. PAN3 acts as a positive regulator for PAN activity, recruiting the catalytic subunit PAN2 to mRNA via its interaction with RNA and PABP. The chain is PAN2-PAN3 deadenylation complex subunit pan3 from Dictyostelium discoideum (Social amoeba).